A 30-amino-acid polypeptide reads, in one-letter code: Cytochrome c3, 50 kDa (30 aa).

Monomer. Binds 4 heme groups per subunit.

The protein localises to the periplasm. Its function is as follows. Participates in sulfate respiration coupled with phosphorylation by transferring electrons from the enzyme dehydrogenase to ferredoxin. In Desulfuromonas acetoxidans (Chloropseudomonas ethylica), this protein is Cytochrome c3, 50 kDa.